We begin with the raw amino-acid sequence, 314 residues long: Aspartate carbamoyltransferase catalytic subunit (314 aa).

Residues R55 and T56 each contribute to the carbamoyl phosphate site. L-aspartate is bound at residue K83. Carbamoyl phosphate contacts are provided by R105, H139, and Q142. Residues R172 and R226 each coordinate L-aspartate. Residues G267 and P268 each contribute to the carbamoyl phosphate site.

It belongs to the aspartate/ornithine carbamoyltransferase superfamily. ATCase family. Heterododecamer (2C3:3R2) of six catalytic PyrB chains organized as two trimers (C3), and six regulatory PyrI chains organized as three dimers (R2).

It catalyses the reaction carbamoyl phosphate + L-aspartate = N-carbamoyl-L-aspartate + phosphate + H(+). It participates in pyrimidine metabolism; UMP biosynthesis via de novo pathway; (S)-dihydroorotate from bicarbonate: step 2/3. Catalyzes the condensation of carbamoyl phosphate and aspartate to form carbamoyl aspartate and inorganic phosphate, the committed step in the de novo pyrimidine nucleotide biosynthesis pathway. The chain is Aspartate carbamoyltransferase catalytic subunit from Rhodococcus erythropolis (strain PR4 / NBRC 100887).